The sequence spans 71 residues: UPF0352 protein Asuc_0778 (71 aa).

Belongs to the UPF0352 family.

The chain is UPF0352 protein Asuc_0778 from Actinobacillus succinogenes (strain ATCC 55618 / DSM 22257 / CCUG 43843 / 130Z).